A 293-amino-acid chain; its full sequence is Pantothenate synthetase (293 aa).

30 to 37 (MGYLHKGH) serves as a coordination point for ATP. The active-site Proton donor is histidine 37. Residue glutamine 61 participates in (R)-pantoate binding. Glutamine 61 is a beta-alanine binding site. 147 to 150 (GEKD) contributes to the ATP binding site. (R)-pantoate is bound at residue glutamine 153. ATP-binding positions include valine 176 and 184 to 187 (CSSR).

It belongs to the pantothenate synthetase family. In terms of assembly, homodimer.

It is found in the cytoplasm. It carries out the reaction (R)-pantoate + beta-alanine + ATP = (R)-pantothenate + AMP + diphosphate + H(+). It functions in the pathway cofactor biosynthesis; (R)-pantothenate biosynthesis; (R)-pantothenate from (R)-pantoate and beta-alanine: step 1/1. Catalyzes the condensation of pantoate with beta-alanine in an ATP-dependent reaction via a pantoyl-adenylate intermediate. The protein is Pantothenate synthetase of Brucella melitensis biotype 2 (strain ATCC 23457).